The primary structure comprises 243 residues: Triosephosphate isomerase (243 aa).

9 to 11 (NWK) serves as a coordination point for substrate. His96 acts as the Electrophile in catalysis. Catalysis depends on Glu165, which acts as the Proton acceptor. Substrate contacts are provided by residues Gly171, Ser204, and 225–226 (GG).

It belongs to the triosephosphate isomerase family. In terms of assembly, homodimer.

The protein localises to the cytoplasm. The enzyme catalyses D-glyceraldehyde 3-phosphate = dihydroxyacetone phosphate. It participates in carbohydrate biosynthesis; gluconeogenesis. The protein operates within carbohydrate degradation; glycolysis; D-glyceraldehyde 3-phosphate from glycerone phosphate: step 1/1. Involved in the gluconeogenesis. Catalyzes stereospecifically the conversion of dihydroxyacetone phosphate (DHAP) to D-glyceraldehyde-3-phosphate (G3P). The polypeptide is Triosephosphate isomerase (Nostoc punctiforme (strain ATCC 29133 / PCC 73102)).